A 240-amino-acid polypeptide reads, in one-letter code: Protein MGARP (240 aa).

The Cytoplasmic portion of the chain corresponds to Met-1–Asn-45. Residues Met-46–Tyr-64 traverse the membrane as a helical; Anchor for type IV membrane protein segment. Residues Lys-65–Gly-240 are Mitochondrial intermembrane-facing. The tract at residues Ala-72–Gly-240 is disordered. The segment covering Lys-73–Ala-87 has biased composition (basic and acidic residues). 2 stretches are compositionally biased toward low complexity: residues Thr-166–Thr-183 and Glu-228–Gly-240.

In terms of assembly, interacts with RHOT1/Miro-1, RHOT2/Miro-2, TRAK1/OIP106 and TRAK2/GRIF1.

It is found in the mitochondrion. The protein resides in the mitochondrion outer membrane. The protein localises to the mitochondrion inner membrane. Its function is as follows. Plays a role in the trafficking of mitochondria along microtubules. Regulates the kinesin-mediated axonal transport of mitochondria to nerve terminals along microtubules during hypoxia. Participates in the translocation of TRAK2/GRIF1 from the cytoplasm to the mitochondrion. Also plays a role in steroidogenesis through maintenance of mitochondrial abundance and morphology. Plays an inhibitory role during neocortex development by regulating mitochondrial morphology, distribution and motility in neocortical neurons. The protein is Protein MGARP (MGARP) of Bos taurus (Bovine).